The sequence spans 481 residues: Glycogen synthase (481 aa).

K16 is a binding site for ADP-alpha-D-glucose.

Belongs to the glycosyltransferase 1 family. Bacterial/plant glycogen synthase subfamily.

The catalysed reaction is [(1-&gt;4)-alpha-D-glucosyl](n) + ADP-alpha-D-glucose = [(1-&gt;4)-alpha-D-glucosyl](n+1) + ADP + H(+). It functions in the pathway glycan biosynthesis; glycogen biosynthesis. In terms of biological role, synthesizes alpha-1,4-glucan chains using ADP-glucose. This Cellvibrio japonicus (strain Ueda107) (Pseudomonas fluorescens subsp. cellulosa) protein is Glycogen synthase.